Reading from the N-terminus, the 822-residue chain is Molybdenum cofactor sulfurase (822 aa).

Position 239 is an N6-(pyridoxal phosphate)lysine (Lys-239). Residue Cys-401 is part of the active site. The interval 633–666 (TRISNPTRSSRRSQRALMPGSFPEDPSPTSEQPP) is disordered. The 178-residue stretch at 643–820 (RRSQRALMPG…VMVGDVVTPQ (178 aa)) folds into the MOSC domain.

Belongs to the class-V pyridoxal-phosphate-dependent aminotransferase family. MOCOS subfamily. The cofactor is pyridoxal 5'-phosphate.

It carries out the reaction Mo-molybdopterin + L-cysteine + AH2 = thio-Mo-molybdopterin + L-alanine + A + H2O. Its pathway is cofactor biosynthesis; molybdopterin biosynthesis. In terms of biological role, sulfurates the molybdenum cofactor. Sulfation of molybdenum is essential for xanthine dehydrogenase (XDH) and aldehyde oxidase (ADO) enzymes in which molybdenum cofactor is liganded by 1 oxygen and 1 sulfur atom in active form. In Aspergillus oryzae (strain ATCC 42149 / RIB 40) (Yellow koji mold), this protein is Molybdenum cofactor sulfurase.